The following is a 174-amino-acid chain: Variant surface antigen F (174 aa).

Residues 1-29 (MKKSIFSKKLLFSFGSLVALAAIPLITIS) form the signal peptide. A lipid anchor (N-palmitoyl cysteine) is attached at Cys-30. Cys-30 carries the S-diacylglycerol cysteine lipid modification. The tract at residues 32 to 174 (QTNTDQSQQP…PEQGNSQVSK (143 aa)) is disordered. Residues 43–53 (SGSGSGSGTSN) are compositionally biased toward gly residues. 9 repeat units span residues 55–67 (SGST…GNNQ), 68–80 (GGST…GNNQ), 81–93 (GGST…GNNQ), 94–106 (GGST…GNNQ), 107–119 (GGST…GNNQ), 120–132 (GGST…GNNQ), 133–145 (GGST…GNNQ), 146–158 (GGST…GNNQ), and 159–171 (GGST…GNSQ). The tract at residues 55–171 (SGSTPTPEQG…TPTPEQGNSQ (117 aa)) is 9 X 13 AA tandem repeats. Polar residues predominate over residues 62–174 (EQGNNQGGST…PEQGNSQVSK (113 aa)).

The protein localises to the cell membrane. Functionally, responsible for the antigenic diversity for host adaptation. Expression in E.coli of a construct containing vlpD, vlpE, and vlpF yields antigenically distinguishable products corresponding to each gene. The sequence is that of Variant surface antigen F (vlpF) from Mesomycoplasma hyorhinis (Mycoplasma hyorhinis).